The following is a 170-amino-acid chain: Peptide deformylase 2 (170 aa).

Positions 94 and 136 each coordinate Fe cation. The active site involves Glu-137. His-140 contributes to the Fe cation binding site.

Belongs to the polypeptide deformylase family. Requires Fe(2+) as cofactor.

It catalyses the reaction N-terminal N-formyl-L-methionyl-[peptide] + H2O = N-terminal L-methionyl-[peptide] + formate. Its function is as follows. Removes the formyl group from the N-terminal Met of newly synthesized proteins. Requires at least a dipeptide for an efficient rate of reaction. N-terminal L-methionine is a prerequisite for activity but the enzyme has broad specificity at other positions. This Xanthomonas campestris pv. campestris (strain ATCC 33913 / DSM 3586 / NCPPB 528 / LMG 568 / P 25) protein is Peptide deformylase 2.